A 137-amino-acid polypeptide reads, in one-letter code: Large ribosomal subunit protein uL16 (137 aa).

It belongs to the universal ribosomal protein uL16 family. In terms of assembly, part of the 50S ribosomal subunit.

Binds 23S rRNA and is also seen to make contacts with the A and possibly P site tRNAs. The sequence is that of Large ribosomal subunit protein uL16 from Nitratidesulfovibrio vulgaris (strain ATCC 29579 / DSM 644 / CCUG 34227 / NCIMB 8303 / VKM B-1760 / Hildenborough) (Desulfovibrio vulgaris).